A 469-amino-acid chain; its full sequence is Uronate isomerase (469 aa).

This sequence belongs to the metallo-dependent hydrolases superfamily. Uronate isomerase family.

It catalyses the reaction D-glucuronate = D-fructuronate. The catalysed reaction is aldehydo-D-galacturonate = keto-D-tagaturonate. The protein operates within carbohydrate metabolism; pentose and glucuronate interconversion. The protein is Uronate isomerase of Yersinia enterocolitica serotype O:8 / biotype 1B (strain NCTC 13174 / 8081).